A 549-amino-acid polypeptide reads, in one-letter code: ATP synthase subunit alpha (549 aa).

ATP is bound at residue 172 to 179; the sequence is GDRKTGKT.

Belongs to the ATPase alpha/beta chains family. In terms of assembly, F-type ATPases have 2 components, CF(1) - the catalytic core - and CF(0) - the membrane proton channel. CF(1) has five subunits: alpha(3), beta(3), gamma(1), delta(1), epsilon(1). CF(0) has three main subunits: a(1), b(2) and c(9-12). The alpha and beta chains form an alternating ring which encloses part of the gamma chain. CF(1) is attached to CF(0) by a central stalk formed by the gamma and epsilon chains, while a peripheral stalk is formed by the delta and b chains.

It localises to the cell membrane. The enzyme catalyses ATP + H2O + 4 H(+)(in) = ADP + phosphate + 5 H(+)(out). In terms of biological role, produces ATP from ADP in the presence of a proton gradient across the membrane. The alpha chain is a regulatory subunit. The chain is ATP synthase subunit alpha from Mycobacterium tuberculosis (strain CDC 1551 / Oshkosh).